Reading from the N-terminus, the 315-residue chain is Methionyl-tRNA formyltransferase (315 aa).

112–115 (SLLP) contacts (6S)-5,6,7,8-tetrahydrofolate.

This sequence belongs to the Fmt family.

It carries out the reaction L-methionyl-tRNA(fMet) + (6R)-10-formyltetrahydrofolate = N-formyl-L-methionyl-tRNA(fMet) + (6S)-5,6,7,8-tetrahydrofolate + H(+). Its function is as follows. Attaches a formyl group to the free amino group of methionyl-tRNA(fMet). The formyl group appears to play a dual role in the initiator identity of N-formylmethionyl-tRNA by promoting its recognition by IF2 and preventing the misappropriation of this tRNA by the elongation apparatus. The polypeptide is Methionyl-tRNA formyltransferase (Rhizobium rhizogenes (strain K84 / ATCC BAA-868) (Agrobacterium radiobacter)).